Here is a 706-residue protein sequence, read N- to C-terminus: Glutamine-dependent NAD(+) synthetase (706 aa).

The CN hydrolase domain maps to 5-275; sequence VTVATCALNQ…VEVLTATLDL (271 aa). Glu45 (proton acceptor; for glutaminase activity) is an active-site residue. The For glutaminase activity role is filled by Lys114. Catalysis depends on Cys175, which acts as the Nucleophile; for glutaminase activity. The interval 325–706 is ligase; it reads YHSPAEEISL…RQRQELDGVD (382 aa). Residue 355 to 362 participates in ATP binding; that stretch reads PLSGGVDS. Ser357 is an active-site residue.

This sequence in the C-terminal section; belongs to the NAD synthetase family. In terms of assembly, homohexamer.

The catalysed reaction is deamido-NAD(+) + L-glutamine + ATP + H2O = L-glutamate + AMP + diphosphate + NAD(+) + H(+). Its pathway is cofactor biosynthesis; NAD(+) biosynthesis; NAD(+) from deamido-NAD(+) (L-Gln route): step 1/1. Functionally, catalyzes the ATP-dependent amidation of deamido-NAD to form NAD. Uses L-glutamine as a nitrogen source. The chain is Glutamine-dependent NAD(+) synthetase (NADSYN1) from Bos taurus (Bovine).